Reading from the N-terminus, the 391-residue chain is Multidrug resistance protein MdtL (391 aa).

At 1–3 the chain is on the cytoplasmic side; that stretch reads MSR. A helical transmembrane segment spans residues 4–24; the sequence is FLICSFALVLLYPAGIDMYLV. Residues 25–41 are Periplasmic-facing; sequence GLPRIAADLNASEAQLH. Residues 42–62 form a helical membrane-spanning segment; the sequence is IAFSVYLAGMAAAMLFAGKVA. The Cytoplasmic portion of the chain corresponds to 63 to 68; it reads DRSGRK. Residues 69-89 form a helical membrane-spanning segment; that stretch reads PVAIPGAALFIITSVFCSLAE. Topologically, residues 90–92 are periplasmic; that stretch reads TST. The chain crosses the membrane as a helical span at residues 93-113; the sequence is LFLAGRFLQGLGAGCCYVVAF. Topologically, residues 114 to 130 are cytoplasmic; that stretch reads AILRDTLDDRRRAKVLS. A helical membrane pass occupies residues 131–151; sequence LLNGITCIIPVLAPVLGHLIM. Residues 152-157 are Periplasmic-facing; the sequence is LKFPWQ. The helical transmembrane segment at 158-178 threads the bilayer; it reads SLFWTMAIMGIAVLMLSLFIL. The Cytoplasmic portion of the chain corresponds to 179–198; that stretch reads KETRPAAPAASDKSRENSES. The chain crosses the membrane as a helical span at residues 199 to 221; sequence LLNRFFLSRVVITTLSVSVILTF. Over 222 to 244 the chain is Periplasmic; sequence VNTSPVLLMEIMGFERGEYATIM. The helical transmembrane segment at 245–265 threads the bilayer; that stretch reads ALTAGVSMTVSFSTPFALGIF. The Cytoplasmic segment spans residues 266–268; sequence KPR. A helical membrane pass occupies residues 269–289; the sequence is TLMITSQVLFLAAGITLTVSP. Residues 290 to 292 lie on the Periplasmic side of the membrane; that stretch reads SHA. Residues 293–313 form a helical membrane-spanning segment; sequence VSLFGITLICAGFSVGFGVAM. The Cytoplasmic portion of the chain corresponds to 314–330; it reads SQALGPFSLRAGVASST. A helical membrane pass occupies residues 331-351; sequence LGIAQVCGSSLWIWLAAVVGI. Over 352-355 the chain is Periplasmic; that stretch reads SAWN. A helical membrane pass occupies residues 356-376; that stretch reads MLIGILIACSIVSLLLIMFVA. Over 377–391 the chain is Cytoplasmic; it reads PGRPVTAHEEIHHHA.

It belongs to the major facilitator superfamily. DHA1 family. MdtL (TC 2.A.1.2.22) subfamily.

It is found in the cell inner membrane. Functionally, confers resistance to chloramphenicol. The polypeptide is Multidrug resistance protein MdtL (mdtL) (Escherichia coli O157:H7).